A 305-amino-acid polypeptide reads, in one-letter code: tRNA pseudouridine synthase B (305 aa).

D39 serves as the catalytic Nucleophile.

This sequence belongs to the pseudouridine synthase TruB family. Type 1 subfamily.

The enzyme catalyses uridine(55) in tRNA = pseudouridine(55) in tRNA. Functionally, responsible for synthesis of pseudouridine from uracil-55 in the psi GC loop of transfer RNAs. The chain is tRNA pseudouridine synthase B from Staphylococcus saprophyticus subsp. saprophyticus (strain ATCC 15305 / DSM 20229 / NCIMB 8711 / NCTC 7292 / S-41).